Reading from the N-terminus, the 157-residue chain is MKFPCLSFRQPYAGLILNGVKTLETRWRPLLSSVQKYTIAIHIAHKDWEDDEWQEVLMERLGMTWTQIQTLLQAGEKYGRGVIAGLIDIGETFQCPETLTAEEAVELETQAVLTNLQLKYLTQVSNPRWLLEPIPRKGGKDIFQVDIPEHLIPLEKE.

Positions 6 to 92 (LSFRQPYAGL…IAGLIDIGET (87 aa)) constitute an ASCH domain.

This sequence belongs to the EOLA family. As to quaternary structure, interacts with MT2A.

Functionally, may play a role in cell protection during the inflammatory response. In epithelial cells, negatively regulates IL6 production and apoptosis through the regulation of MT2A expression. The chain is Protein EOLA1 from Mus musculus (Mouse).